Here is a 352-residue protein sequence, read N- to C-terminus: MTTDIFFNPMWDVRLTDTSLRDGSHHKRHQFTKDEVQAIVAALDVAGVPVIEVTHGDGLGGSSFNYGFSKTPEQELIKLAAETAKEAKIAFLMLPGVGTKEDIKEAQNNGGSICRIATHCTEADVSIQHFGLARELGLETVGFLMMSHTIPPEKLAQQARIMADAGCQCVYVVDSAGALVLEGVRDRVAALVAELGDDAQVGFHGHENLGLGVANSVEAVRAGAKQIDGSCRRFGAGAGNAPVEALIGVFDKIGVKTGIDFFDIADAAEEVVAPAMPAECLLDRNALIMGYSGVYSSFLKHAIRQSERYGVPAHQLLHRAGQRKLIGGQEDQLIDIALEIKREQESGAAAAR.

Residues 13–265 form the Pyruvate carboxyltransferase domain; sequence VRLTDTSLRD…KTGIDFFDIA (253 aa). Residue 21-22 participates in substrate binding; that stretch reads RD. Aspartate 22 provides a ligand contact to Mn(2+). Histidine 25 (proton acceptor) is an active-site residue. Substrate-binding residues include serine 175 and histidine 204. 2 residues coordinate Mn(2+): histidine 204 and histidine 206. Tyrosine 295 provides a ligand contact to substrate.

The protein belongs to the 4-hydroxy-2-oxovalerate aldolase family.

It carries out the reaction (S)-4-hydroxy-2-oxopentanoate = acetaldehyde + pyruvate. In Mycobacterium avium (strain 104), this protein is 4-hydroxy-2-oxovalerate aldolase.